We begin with the raw amino-acid sequence, 360 residues long: Peptide chain release factor 1 (360 aa).

An N5-methylglutamine modification is found at glutamine 235.

It belongs to the prokaryotic/mitochondrial release factor family. In terms of processing, methylated by PrmC. Methylation increases the termination efficiency of RF1.

It localises to the cytoplasm. In terms of biological role, peptide chain release factor 1 directs the termination of translation in response to the peptide chain termination codons UAG and UAA. The sequence is that of Peptide chain release factor 1 from Cupriavidus pinatubonensis (strain JMP 134 / LMG 1197) (Cupriavidus necator (strain JMP 134)).